A 659-amino-acid polypeptide reads, in one-letter code: Oligopeptide-binding protein AmiA (659 aa).

The first 22 residues, 1-22 (MKKNRVFATAGLVLLAAGVLAA), serve as a signal peptide directing secretion. A lipid anchor (N-palmitoyl cysteine) is attached at C23. A lipid anchor (S-diacylglycerol cysteine) is attached at C23.

This sequence belongs to the bacterial solute-binding protein 5 family.

It is found in the cell membrane. Functionally, part of the binding-protein-dependent transport system for oligopeptides; probably an oligopeptide binding protein. The sequence is that of Oligopeptide-binding protein AmiA (amiA) from Streptococcus pneumoniae serotype 4 (strain ATCC BAA-334 / TIGR4).